The primary structure comprises 61 residues: uncharacterized protein (61 aa).

A coiled-coil region spans residues 34–61; the sequence is TDVEDIDRLISMLDDLEAKYERFKKDWE.

This is an uncharacterized protein from Bacillus subtilis (strain 168).